Consider the following 712-residue polypeptide: Probable metal-nicotianamine transporter YSL11 (712 aa).

The tract at residues arginine 25 to proline 48 is disordered. The next 14 membrane-spanning stretches (helical) occupy residues alanine 70–leucine 90, glycine 93–tryptophan 113, cysteine 138–methionine 158, leucine 180–proline 200, leucine 242–glycine 262, isoleucine 300–isoleucine 320, valine 345–glycine 365, valine 418–isoleucine 438, isoleucine 446–leucine 466, leucine 478–leucine 498, phenylalanine 532–leucine 552, leucine 593–valine 613, phenylalanine 631–tryptophan 651, and valine 666–leucine 686.

The protein belongs to the YSL (TC 2.A.67.2) family.

The protein localises to the membrane. Its function is as follows. May be involved in the transport of nicotianamine-chelated metals. This Oryza sativa subsp. japonica (Rice) protein is Probable metal-nicotianamine transporter YSL11 (YSL11).